Here is a 353-residue protein sequence, read N- to C-terminus: Protein RecA (353 aa).

Residue 67 to 74 (GPESSGKT) participates in ATP binding.

Belongs to the RecA family.

It is found in the cytoplasm. In terms of biological role, can catalyze the hydrolysis of ATP in the presence of single-stranded DNA, the ATP-dependent uptake of single-stranded DNA by duplex DNA, and the ATP-dependent hybridization of homologous single-stranded DNAs. It interacts with LexA causing its activation and leading to its autocatalytic cleavage. The sequence is that of Protein RecA from Shewanella sediminis (strain HAW-EB3).